A 363-amino-acid polypeptide reads, in one-letter code: Uroporphyrinogen decarboxylase (363 aa).

Substrate-binding positions include 27–31 (RQAGR), aspartate 77, tyrosine 157, threonine 212, and histidine 333.

This sequence belongs to the uroporphyrinogen decarboxylase family. In terms of assembly, homodimer.

The protein localises to the cytoplasm. The enzyme catalyses uroporphyrinogen III + 4 H(+) = coproporphyrinogen III + 4 CO2. Its pathway is porphyrin-containing compound metabolism; protoporphyrin-IX biosynthesis; coproporphyrinogen-III from 5-aminolevulinate: step 4/4. In terms of biological role, catalyzes the decarboxylation of four acetate groups of uroporphyrinogen-III to yield coproporphyrinogen-III. The protein is Uroporphyrinogen decarboxylase of Cupriavidus pinatubonensis (strain JMP 134 / LMG 1197) (Cupriavidus necator (strain JMP 134)).